The chain runs to 214 residues: Ribosomal RNA large subunit methyltransferase E (214 aa).

S-adenosyl-L-methionine is bound by residues Gly68, Trp70, Asp88, Asp104, and Asp129. The Proton acceptor role is filled by Lys169.

This sequence belongs to the class I-like SAM-binding methyltransferase superfamily. RNA methyltransferase RlmE family.

It localises to the cytoplasm. It catalyses the reaction uridine(2552) in 23S rRNA + S-adenosyl-L-methionine = 2'-O-methyluridine(2552) in 23S rRNA + S-adenosyl-L-homocysteine + H(+). Functionally, specifically methylates the uridine in position 2552 of 23S rRNA at the 2'-O position of the ribose in the fully assembled 50S ribosomal subunit. This chain is Ribosomal RNA large subunit methyltransferase E, found in Magnetococcus marinus (strain ATCC BAA-1437 / JCM 17883 / MC-1).